A 426-amino-acid polypeptide reads, in one-letter code: Enolase (426 aa).

(2R)-2-phosphoglycerate is bound at residue Gln163. Catalysis depends on Glu205, which acts as the Proton donor. Mg(2+) contacts are provided by Asp242, Glu283, and Asp310. Positions 335, 364, 365, and 386 each coordinate (2R)-2-phosphoglycerate. Lys335 (proton acceptor) is an active-site residue.

This sequence belongs to the enolase family. The cofactor is Mg(2+).

The protein localises to the cytoplasm. It is found in the secreted. It localises to the cell surface. It catalyses the reaction (2R)-2-phosphoglycerate = phosphoenolpyruvate + H2O. It participates in carbohydrate degradation; glycolysis; pyruvate from D-glyceraldehyde 3-phosphate: step 4/5. Its function is as follows. Catalyzes the reversible conversion of 2-phosphoglycerate (2-PG) into phosphoenolpyruvate (PEP). It is essential for the degradation of carbohydrates via glycolysis. This chain is Enolase, found in Leifsonia xyli subsp. xyli (strain CTCB07).